Consider the following 245-residue polypeptide: MSSLVSRCQVIALLVLFFFGVCLAGKDIPANFVFGDSLVEVGNNNYLATLAKANNFPNGIDFGSPTGRFTNGRTIVDIIYQALGSDELTPPYLAPTTRGPLILNGANYAPGGSGPLNSPGSTNLDSWSPEQLKAMMFGVNYLAPVFFKKMDGQTIAISSLSTLSRAANLYRQILAKEVAKAIAQDTTTDLPKASHGVSSSSVKEELRPKETYFCDFYGRPIVYPILTSARRVTWARKINYDINNM.

A signal peptide spans 1–24 (MSSLVSRCQVIALLVLFFFGVCLA). The Nucleophile role is filled by S37.

It belongs to the 'GDSL' lipolytic enzyme family.

It is found in the secreted. This is GDSL esterase/lipase At4g16220 from Arabidopsis thaliana (Mouse-ear cress).